Here is a 310-residue protein sequence, read N- to C-terminus: GMP synthase [glutamine-hydrolyzing] subunit B (310 aa).

In terms of domain architecture, GMPS ATP-PPase spans 1-187; that stretch reads MSTSSYIDQI…LGLRTDLQPF (187 aa). Residue 27 to 33 participates in ATP binding; the sequence is SGGQDSS.

Heterodimer composed of a glutamine amidotransferase subunit (A) and a GMP-binding subunit (B).

It catalyses the reaction XMP + L-glutamine + ATP + H2O = GMP + L-glutamate + AMP + diphosphate + 2 H(+). Its pathway is purine metabolism; GMP biosynthesis; GMP from XMP (L-Gln route): step 1/1. Functionally, catalyzes the synthesis of GMP from XMP. The sequence is that of GMP synthase [glutamine-hydrolyzing] subunit B (guaAB) from Thermoplasma acidophilum (strain ATCC 25905 / DSM 1728 / JCM 9062 / NBRC 15155 / AMRC-C165).